The primary structure comprises 672 residues: tRNA 5-methylaminomethyl-2-thiouridine biosynthesis bifunctional protein MnmC (672 aa).

The interval 1 to 243 is tRNA (mnm(5)s(2)U34)-methyltransferase; sequence MTSIKNAELG…KREMIAGSME (243 aa). An FAD-dependent cmnm(5)s(2)U34 oxidoreductase region spans residues 269–672; it reads IGGGIASAAL…LRKGKAITEL (404 aa).

In the N-terminal section; belongs to the methyltransferase superfamily. tRNA (mnm(5)s(2)U34)-methyltransferase family. The protein in the C-terminal section; belongs to the DAO family. It depends on FAD as a cofactor.

The protein localises to the cytoplasm. The catalysed reaction is 5-aminomethyl-2-thiouridine(34) in tRNA + S-adenosyl-L-methionine = 5-methylaminomethyl-2-thiouridine(34) in tRNA + S-adenosyl-L-homocysteine + H(+). Functionally, catalyzes the last two steps in the biosynthesis of 5-methylaminomethyl-2-thiouridine (mnm(5)s(2)U) at the wobble position (U34) in tRNA. Catalyzes the FAD-dependent demodification of cmnm(5)s(2)U34 to nm(5)s(2)U34, followed by the transfer of a methyl group from S-adenosyl-L-methionine to nm(5)s(2)U34, to form mnm(5)s(2)U34. This Vibrio campbellii (strain ATCC BAA-1116) protein is tRNA 5-methylaminomethyl-2-thiouridine biosynthesis bifunctional protein MnmC.